Reading from the N-terminus, the 338-residue chain is Popeye domain-containing protein 1 (338 aa).

Topologically, residues 1 to 40 (MATESILITTLPMDLNSQINNVTFGLNENETLCENWREIH) are extracellular. N-linked (GlcNAc...) asparagine glycans are attached at residues Asn-21 and Asn-29. A helical transmembrane segment spans residues 41–61 (HLVFHLANTCFAAGLVIPSTL). Over 62 to 65 (NLHM) the chain is Cytoplasmic. Residues 66–86 (ILLRGMLCLGCIFFIIWAILF) form a helical membrane-spanning segment. The Extracellular portion of the chain corresponds to 87-91 (RCALD). The helical transmembrane segment at 92-112 (IMIWNATFLSMNFMHFIYLVY) threads the bilayer. Residues 113-338 (KKRPIKIEKD…VGPLSHAVFC (226 aa)) are Cytoplasmic-facing.

This sequence belongs to the popeye family.

Its subcellular location is the lateral cell membrane. It is found in the cell junction. The protein resides in the tight junction. The protein localises to the membrane. It localises to the cell membrane. Its subcellular location is the sarcolemma. It is found in the caveola. Functionally, cell adhesion molecule involved in the establishment and/or maintenance of cell integrity. May play a role in vamp3-mediated vesicular transport and recycling of different receptor molecules. May be involved in the formation and regulation of the tight junction (TJ) paracellular permeability barrier in epithelial cells. May induce primordial adhesive contact and aggregation of epithelial cells in a Ca(2+)-independent manner. May be involved in epithelial movement during corneal sheet formation and regeneration. May play a role in the regulation of cell shape and movement by modulating the Rho-GTPase activity. May be involved in skeletal muscle and heart development as well as in the maintenance of heart function. May also be involved in striated muscle regeneration and in the regulation of cell spreading. The sequence is that of Popeye domain-containing protein 1 (popdc1) from Xenopus tropicalis (Western clawed frog).